The sequence spans 295 residues: Putative nudix hydrolase 7 (295 aa).

The region spanning 9 to 182 (SWRSAASIIL…KYALPPPQVY (174 aa)) is the Nudix hydrolase domain. The short motif at 52-73 (TDAKLGDEFRIAAVRELFEESG) is the Nudix box element. Residues glutamate 67 and glutamate 71 each contribute to the Mg(2+) site.

It belongs to the Nudix hydrolase family. It depends on Mg(2+) as a cofactor. Mn(2+) is required as a cofactor.

Probably mediates the hydrolysis of some nucleoside diphosphate derivatives. The protein is Putative nudix hydrolase 7 (ndx-7) of Caenorhabditis elegans.